A 953-amino-acid chain; its full sequence is Xylosyltransferase 1 (953 aa).

Over 1–17 (MVAAPCARRLARRSHSA) the chain is Cytoplasmic. The helical; Signal-anchor for type II membrane protein transmembrane segment at 18 to 38 (LLAALMVLLLHTLVVWNFSSL) threads the bilayer. At 39–953 (DSGAGEQRRA…GAVKPDGRLR (915 aa)) the chain is on the lumenal side. Residues 48 to 62 (AGAAAGAAEQQQPAA) show a composition bias toward low complexity. Disordered stretches follow at residues 48–67 (AGAA…RRER) and 74–251 (LPAA…APKC). Gly residues predominate over residues 79–97 (GGPGGRAGGGGARGGGPGG). Over residues 138–154 (KVRTDSNNENSVPKDFE) the composition is skewed to basic and acidic residues. Positions 156 to 165 (VDNSNFAPRT) are enriched in polar residues. 2 stretches are compositionally biased toward basic and acidic residues: residues 170-197 (HQPE…DKRQ) and 205-216 (GPKEVLPPREKA). Asn-219 carries N-linked (GlcNAc...) asparagine glycosylation. 4 disulfides stabilise this stretch: Cys-251-Cys-279, Cys-295-Cys-536, Cys-555-Cys-568, and Cys-557-Cys-566. UDP-alpha-D-xylose is bound by residues Val-327, Asp-355, and 384–386 (TIW). Asn-415 carries N-linked (GlcNAc...) asparagine glycosylation. 488–489 (DW) provides a ligand contact to UDP-alpha-D-xylose. UDP-alpha-D-xylose-binding positions include Ser-569 and 592–593 (RK). Cystine bridges form between Cys-669/Cys-921 and Cys-914/Cys-927. Asn-771 carries N-linked (GlcNAc...) asparagine glycosylation. Residues 933–953 (SSFSPDPKSELGAVKPDGRLR) form a disordered region.

The protein belongs to the glycosyltransferase 14 family. XylT subfamily. In terms of assembly, monomer. A divalent metal cation is required as a cofactor. Post-translationally, contains 7 disulfide bonds. In terms of processing, N-glycosylated. Detected in brain, spleen, kidney and testis, and at low levels in skeletal muscle.

It is found in the golgi apparatus membrane. The catalysed reaction is UDP-alpha-D-xylose + L-seryl-[protein] = 3-O-(beta-D-xylosyl)-L-seryl-[protein] + UDP + H(+). Its pathway is glycan metabolism; chondroitin sulfate biosynthesis. The protein operates within glycan metabolism; heparan sulfate biosynthesis. Catalyzes the first step in the biosynthesis of chondroitin sulfate and dermatan sulfate proteoglycans, such as DCN. Transfers D-xylose from UDP-D-xylose to specific serine residues of the core protein. Required for normal maturation of chondrocytes during bone development, normal onset of ossification and normal embryonic and postnatal skeleton development, especially of the long bones. The polypeptide is Xylosyltransferase 1 (Xylt1) (Mus musculus (Mouse)).